The following is a 123-amino-acid chain: Large ribosomal subunit protein uL14c (123 aa).

Belongs to the universal ribosomal protein uL14 family. As to quaternary structure, part of the 50S ribosomal subunit.

Its subcellular location is the plastid. It localises to the chloroplast. Its function is as follows. Binds to 23S rRNA. This Brachypodium distachyon (Purple false brome) protein is Large ribosomal subunit protein uL14c.